The primary structure comprises 946 residues: Bifunctional glutamine synthetase adenylyltransferase/adenylyl-removing enzyme (946 aa).

Positions methionine 1 to glutamate 440 are adenylyl removase. Positions serine 449–glutamate 946 are adenylyl transferase.

The protein belongs to the GlnE family. Mg(2+) is required as a cofactor.

The catalysed reaction is [glutamine synthetase]-O(4)-(5'-adenylyl)-L-tyrosine + phosphate = [glutamine synthetase]-L-tyrosine + ADP. It catalyses the reaction [glutamine synthetase]-L-tyrosine + ATP = [glutamine synthetase]-O(4)-(5'-adenylyl)-L-tyrosine + diphosphate. In terms of biological role, involved in the regulation of glutamine synthetase GlnA, a key enzyme in the process to assimilate ammonia. When cellular nitrogen levels are high, the C-terminal adenylyl transferase (AT) inactivates GlnA by covalent transfer of an adenylyl group from ATP to specific tyrosine residue of GlnA, thus reducing its activity. Conversely, when nitrogen levels are low, the N-terminal adenylyl removase (AR) activates GlnA by removing the adenylyl group by phosphorolysis, increasing its activity. The regulatory region of GlnE binds the signal transduction protein PII (GlnB) which indicates the nitrogen status of the cell. The sequence is that of Bifunctional glutamine synthetase adenylyltransferase/adenylyl-removing enzyme from Escherichia coli O81 (strain ED1a).